A 190-amino-acid polypeptide reads, in one-letter code: Peptide methionine sulfoxide reductase A2-2 (190 aa).

The tract at residues 1–20 (MSNDTGADGGAANPDLGPDA) is disordered. Over residues 10 to 20 (GAANPDLGPDA) the composition is skewed to low complexity.

The protein belongs to the MsrA Met sulfoxide reductase family.

Its subcellular location is the cytoplasm. It localises to the cytosol. The enzyme catalyses L-methionyl-[protein] + [thioredoxin]-disulfide + H2O = L-methionyl-(S)-S-oxide-[protein] + [thioredoxin]-dithiol. It carries out the reaction [thioredoxin]-disulfide + L-methionine + H2O = L-methionine (S)-S-oxide + [thioredoxin]-dithiol. In terms of biological role, catalyzes the reduction of methionine sulfoxide (MetSO) to methionine in proteins. Plays a protective role against oxidative stress by restoring activity to proteins that have been inactivated by methionine oxidation. MSRA family specifically reduces the MetSO S-enantiomer. This Oryza sativa subsp. japonica (Rice) protein is Peptide methionine sulfoxide reductase A2-2 (MSRA2-2).